A 446-amino-acid polypeptide reads, in one-letter code: Phosphoglucosamine mutase (446 aa).

The active-site Phosphoserine intermediate is Ser-99. Residues Ser-99, Asp-242, Asp-244, and Asp-246 each contribute to the Mg(2+) site. Residue Ser-99 is modified to Phosphoserine.

It belongs to the phosphohexose mutase family. The cofactor is Mg(2+). Activated by phosphorylation.

It carries out the reaction alpha-D-glucosamine 1-phosphate = D-glucosamine 6-phosphate. Functionally, catalyzes the conversion of glucosamine-6-phosphate to glucosamine-1-phosphate. The chain is Phosphoglucosamine mutase from Campylobacter concisus (strain 13826).